A 138-amino-acid polypeptide reads, in one-letter code: Bis(5'-nucleosyl)-tetraphosphatase [asymmetrical] (138 aa).

The 132-residue stretch at 1–132 (MVVKAAGLVI…EMGSLLRKFS (132 aa)) folds into the Nudix hydrolase domain. The Nudix box motif lies at 37–58 (GHVDPGEDEWQAAIRETKEEAN).

Belongs to the Nudix hydrolase family. Monomer. Mg(2+) serves as cofactor. The cofactor is Co(2+). Requires Mn(2+) as cofactor. It depends on Zn(2+) as a cofactor. Ca(2+) is required as a cofactor.

It carries out the reaction P(1),P(4)-bis(5'-adenosyl) tetraphosphate + H2O = AMP + ATP + 2 H(+). Its function is as follows. Asymmetrically hydrolyzes Ap4A to yield AMP and ATP. The chain is Bis(5'-nucleosyl)-tetraphosphatase [asymmetrical] (ndx-4) from Caenorhabditis elegans.